Consider the following 311-residue polypeptide: Serpentine receptor class gamma-6 (311 aa).

The next 7 membrane-spanning stretches (helical) occupy residues 24 to 44 (MGQL…IYVI), 58 to 78 (FWLL…FDIF), 101 to 121 (PLLI…KMVA), 148 to 168 (LTAC…NILI), 200 to 220 (YMQI…AILW), 235 to 255 (IWFA…YLHM), and 266 to 286 (IFML…VIMI).

Belongs to the nematode receptor-like protein srg family.

It localises to the membrane. The polypeptide is Serpentine receptor class gamma-6 (srg-6) (Caenorhabditis elegans).